The primary structure comprises 190 residues: Zinc metalloproteinase/disintegrin (190 aa).

In terms of domain architecture, Peptidase M12B spans 1–11; it reads NHNPECIVNEP. The region spanning 19 to 105 is the Disintegrin domain; the sequence is PPVCGNELLE…ECPADVFHKN (87 aa). 6 residues coordinate Ca(2+): V21, N24, L26, E28, E31, and D34. 6 cysteine pairs are disulfide-bonded: C33–C51, C35–C46, C45–C68, C59–C65, C64–C90, and C77–C97. The D/ECD-tripeptide signature appears at 83-85; that stretch reads ECD. Positions 85, 86, 88, 100, and 101 each coordinate Ca(2+). The propeptide occupies 104–190; that stretch reads KNGQPCLDNY…DNSPGQNGPC (87 aa).

This sequence belongs to the venom metalloproteinase (M12B) family. P-III subfamily. In terms of assembly, monomer. Requires Zn(2+) as cofactor. In terms of tissue distribution, expressed by the venom gland.

Its subcellular location is the secreted. Its function is as follows. Impairs hemostasis in the envenomed animal. Inhibits platelet aggregation induced by ADP, thrombin, platelet-activating factor and collagen. Acts by inhibiting fibrinogen interaction with platelet receptors GPIIb/GPIIIa (ITGA2B/ITGB3). In Gloydius brevicauda (Korean slamosa snake), this protein is Zinc metalloproteinase/disintegrin.